Consider the following 926-residue polypeptide: Disease resistance protein RPM1 (926 aa).

A leucine-zipper region spans residues 10-45; the sequence is IGRILSVLENETLLLSGVHGEIDKMKKELLIMKSFL. One can recognise an NB-ARC domain in the interval 153-467; that stretch reads DAKWVNNISE…AQRFVEPIRG (315 aa). 200–207 is a binding site for ATP; that stretch reads GMGGSGKT. LRR repeat units follow at residues 561 to 580, 581 to 603, 605 to 625, 626 to 649, 686 to 707, 708 to 731, 756 to 777, 778 to 804, 825 to 836, 837 to 859, and 876 to 900; these read LHSL…LPSL, NLLR…LVTM, NLKY…NFHK, LVNL…MWKL, LQVM…CMTQ, LTRI…LNKI, TASI…WFNT, LQNL…TLPR, FQNLKILEIVQM, KHLT…YVRA, and LQEL…SVDR.

The protein belongs to the disease resistance NB-LRR family. As to quaternary structure, interacts directly with RIN4 via its N-terminal region. Interacts (via N-terminus) with RIN2 and RIN3 (via C-terminus). Interacts with TIP49A, a protein known to interact with the TATA binding protein complex (TBP). Binds to MORC1/CRT1. Interacts, via its NB-ARC domain, with RIN13.

The protein resides in the endomembrane system. Its subcellular location is the cell membrane. Its function is as follows. Disease resistance (R) protein that specifically recognizes the AvrRpm1 type III effector avirulence protein from Pseudomonas syringae. Resistance proteins guard the plant against pathogens that contain an appropriate avirulence protein via an indirect interaction with this avirulence protein. That triggers a defense system including the hypersensitive response (HR), which restricts the pathogen growth. Acts via its interaction with RIN4, and probably triggers the plant resistance when RIN4 is phosphorylated by AvrRpm1. It is then degraded at the onset of the hypersensitive response. In Arabidopsis thaliana (Mouse-ear cress), this protein is Disease resistance protein RPM1.